The chain runs to 768 residues: DNA replication licensing factor MCM3 homolog 1 (768 aa).

The MCM domain occupies 290-497 (TFDLLGNSLA…IDRQISEHVA (208 aa)). 340–347 (GDPSVAKS) contributes to the ATP binding site. An Arginine finger motif is present at residues 472 to 475 (SRFD). The disordered stretch occupies residues 662–687 (MKQQAEHDAGATGGTVDGHGSSGNDP). Residues 672–682 (ATGGTVDGHGS) show a composition bias toward gly residues.

It belongs to the MCM family.

The protein resides in the nucleus. The enzyme catalyses ATP + H2O = ADP + phosphate + H(+). Functionally, acts as a factor that allows the DNA to undergo a single round of replication per cell cycle. Required for DNA replication and cell proliferation. May act as a component of the MCM complex which is the putative replicative helicase of the replication licensing system in eukaryotic cells. This is DNA replication licensing factor MCM3 homolog 1 (ROA1) from Zea mays (Maize).